The chain runs to 70 residues: Turripeptide Pal9.2 (70 aa).

An N-terminal signal peptide occupies residues 1-20 (MKVYCLLVVLLVGLVSQTQG). Residues 21–70 (QLDKKCNMACTLDYRPVCGSDGKTYPNRCALTSTACESQQSITVLHDGEC) form the Kazal-like domain. 3 cysteine pairs are disulfide-bonded: Cys-26/Cys-56, Cys-30/Cys-49, and Cys-38/Cys-70.

The protein belongs to the conopeptide P-like superfamily. Expressed by the venom duct.

Its subcellular location is the secreted. Acts as a neurotoxin by inhibiting an ion channel. May also act as a serine protease inhibitor, since it possess the kazal serine protease inhibitor signature. The polypeptide is Turripeptide Pal9.2 (Polystira albida (White giant-turris)).